The chain runs to 210 residues: Urease accessory protein UreE (210 aa).

Residues 144–210 (PEGGAYAAGG…GHAHPHSLAR (67 aa)) form a disordered region. Residues 156–202 (HGHDHPHHDHGHDHAHAHAHGTEACDHEHSHDHDCGHHHDHGQDYGH) show a composition bias toward basic and acidic residues.

This sequence belongs to the UreE family.

It localises to the cytoplasm. In terms of biological role, involved in urease metallocenter assembly. Binds nickel. Probably functions as a nickel donor during metallocenter assembly. This chain is Urease accessory protein UreE, found in Paracidovorax citrulli (strain AAC00-1) (Acidovorax citrulli).